Here is a 521-residue protein sequence, read N- to C-terminus: Beta-glucosidase 11 (521 aa).

Residues M1 to S23 form the signal peptide. Residues Q45, H144, and N189–E190 each bind a beta-D-glucoside. The Proton donor role is filled by E190. C209 and C217 are disulfide-bonded. N-linked (GlcNAc...) asparagine glycosylation is found at N216 and N221. Residue Y356 coordinates a beta-D-glucoside. Residues N364 and N388 are each glycosylated (N-linked (GlcNAc...) asparagine). The a beta-D-glucoside site is built by E422, W466, and F482. Residue E422 is the Nucleophile of the active site.

It belongs to the glycosyl hydrolase 1 family.

It catalyses the reaction Hydrolysis of terminal, non-reducing beta-D-glucosyl residues with release of beta-D-glucose.. The polypeptide is Beta-glucosidase 11 (Arabidopsis thaliana (Mouse-ear cress)).